The sequence spans 577 residues: BICD family-like cargo adapter 1 (577 aa).

Positions 63–100 (LLAAGERSSEPGEHPQAEPESPVEGHGPPLPPPPTQDP) are disordered. Residues 69-79 (RSSEPGEHPQA) are compositionally biased toward basic and acidic residues. Positions 116–120 (AARLG) match the CC1 box motif. Positions 121–379 (KALLERNQDM…QLWEAYCQVR (259 aa)) form a coiled coil. Residues 389 to 415 (DSADSAVSTDSSMDESSETSSAKDVPA) form a disordered region. Residues 390–399 (SADSAVSTDS) show a composition bias toward low complexity. Residues 443-528 (LSVEMTALKE…LEAWQDDMHR (86 aa)) adopt a coiled-coil conformation.

The protein belongs to the BICDR family. Part of a tripartite complex with dynein and dynactin, acts an adapter linking the dynein motor complex and dynactin. Interacts with KIF1C. Interacts with RAB6A and RAB6B; interaction is specific to Rab6. In terms of tissue distribution, highly expressed during early embryonic development. Predominantly expressed in kidney, undifferentiated neural tissue and developing eye.

Its subcellular location is the cytoplasm. The protein resides in the cytoskeleton. It is found in the microtubule organizing center. The protein localises to the centrosome. Acts as an adapter protein linking the dynein motor complex to various cargos and converts dynein from a non-processive to a highly processive motor in the presence of dynactin. Facilitates the interaction between dynein and dynactin and activates dynein processivity (the ability to move along a microtubule for a long distance without falling off the track). Predominantly recruits 2 dyneins, which increases both the force and speed of the microtubule motor. Component of secretory vesicle machinery in developing neurons that acts as a regulator of neurite outgrowth. Regulates the secretory vesicle transport by controlling the accumulation of Rab6-containing secretory vesicles in the pericentrosomal region restricting anterograde secretory transport during the early phase of neuronal differentiation, thereby inhibiting neuritogenesis. This chain is BICD family-like cargo adapter 1 (Bicdl1), found in Mus musculus (Mouse).